A 422-amino-acid chain; its full sequence is Tyrosine--tRNA ligase (422 aa).

Tyr35 serves as a coordination point for L-tyrosine. The 'HIGH' region motif lies at 40 to 49; the sequence is PTADSLHIGH. L-tyrosine is bound by residues Tyr170 and Gln174. The 'KMSKS' region motif lies at 232 to 236; it reads KFGKT. Residue Lys235 coordinates ATP. The S4 RNA-binding domain occupies 355–421; sequence LTLVDLLVES…GKKKYFLVTY (67 aa).

It belongs to the class-I aminoacyl-tRNA synthetase family. TyrS type 1 subfamily. As to quaternary structure, homodimer.

Its subcellular location is the cytoplasm. It carries out the reaction tRNA(Tyr) + L-tyrosine + ATP = L-tyrosyl-tRNA(Tyr) + AMP + diphosphate + H(+). Catalyzes the attachment of tyrosine to tRNA(Tyr) in a two-step reaction: tyrosine is first activated by ATP to form Tyr-AMP and then transferred to the acceptor end of tRNA(Tyr). The polypeptide is Tyrosine--tRNA ligase (Bacillus pumilus (strain SAFR-032)).